The chain runs to 142 residues: ATP synthase epsilon chain (142 aa).

This sequence belongs to the ATPase epsilon chain family. In terms of assembly, F-type ATPases have 2 components, CF(1) - the catalytic core - and CF(0) - the membrane proton channel. CF(1) has five subunits: alpha(3), beta(3), gamma(1), delta(1), epsilon(1). CF(0) has three main subunits: a, b and c.

It is found in the cell inner membrane. Functionally, produces ATP from ADP in the presence of a proton gradient across the membrane. This Koribacter versatilis (strain Ellin345) protein is ATP synthase epsilon chain.